A 674-amino-acid polypeptide reads, in one-letter code: DNA ligase (674 aa).

Residues 34-38, 84-85, and glutamate 116 each bind NAD(+); these read DAEYD and SL. Residue lysine 118 is the N6-AMP-lysine intermediate of the active site. NAD(+) is bound by residues arginine 139, glutamate 174, lysine 291, and lysine 315. Positions 409, 412, 425, and 430 each coordinate Zn(2+). Residues 586 to 674 form the BRCT domain; it reads RGEEALKGLT…TGKPVETLAS (89 aa).

It belongs to the NAD-dependent DNA ligase family. LigA subfamily. It depends on Mg(2+) as a cofactor. Requires Mn(2+) as cofactor.

It carries out the reaction NAD(+) + (deoxyribonucleotide)n-3'-hydroxyl + 5'-phospho-(deoxyribonucleotide)m = (deoxyribonucleotide)n+m + AMP + beta-nicotinamide D-nucleotide.. Its function is as follows. DNA ligase that catalyzes the formation of phosphodiester linkages between 5'-phosphoryl and 3'-hydroxyl groups in double-stranded DNA using NAD as a coenzyme and as the energy source for the reaction. It is essential for DNA replication and repair of damaged DNA. This Thermus scotoductus protein is DNA ligase.